Here is a 798-residue protein sequence, read N- to C-terminus: ABC transporter G family member 4 (798 aa).

The interval 1-51 (MEDIGNNNFEIIDDKSDEKNDENFEDKNSRNNINEEQILSNQQQQQQQQQQ) is disordered. Basic and acidic residues predominate over residues 12–29 (IDDKSDEKNDENFEDKNS). Over residues 30–41 (RNNINEEQILSN) the composition is skewed to polar residues. Residues 34–83 (NEEQILSNQQQQQQQQQQQQQQQQQQQQQQQQQQQQQQEQQQFKNEVINT) are a coiled coil. Over residues 42–51 (QQQQQQQQQQ) the composition is skewed to low complexity. Positions 211–464 (IDIEDIESQV…SIDSNYKCPP (254 aa)) constitute an ABC transporter domain. 253-260 (GPSGSGKS) contacts ATP. A run of 7 helical transmembrane segments spans residues 540–560 (VVFFSKIVIAILIGLLFSACF), 579–599 (LFFFIITSLNLLPYSSISTFV), 628–648 (IVSSFFVVLIITTIIYCIVHL), 656–676 (ILSLISFYMVFLASVFMVIAM), 687–707 (FSYCTGVSVVLVLFSGFLVPI), 713–733 (SFGWIHHIDYLFYGFSSIVII), and 771–791 (SIGILTIWIAFFYILAYIGLY). One can recognise an ABC transmembrane type-2 domain in the interval 540–793 (VVFFSKIVIA…ILAYIGLYKF (254 aa)).

This sequence belongs to the ABC transporter superfamily. ABCG family. Eye pigment precursor importer (TC 3.A.1.204) subfamily.

The protein localises to the membrane. The chain is ABC transporter G family member 4 (abcG4) from Dictyostelium discoideum (Social amoeba).